We begin with the raw amino-acid sequence, 146 residues long: Angiogenin (146 aa).

Residues 1 to 24 (MVMGLGLFLLVFMLGLGLTLPTLA) form the signal peptide. Gln-25 is modified (pyrrolidone carboxylic acid). The active-site Proton acceptor is the His-37. Arg-45 contributes to the tRNA binding site. 3 disulfide bridges follow: Cys-50-Cys-105, Cys-63-Cys-116, and Cys-81-Cys-131. Positions 55–59 (RRRHL) match the Nucleolar localization signal motif. Cys-105 and Ile-127 together coordinate tRNA. His-138 (proton donor) is an active-site residue.

Belongs to the pancreatic ribonuclease family. Homodimer. Interacts with RNH1; inhibiting ANG ribonuclease activity. Interacts with PCNA.

Its subcellular location is the secreted. It localises to the nucleus. It is found in the nucleolus. The protein localises to the cytoplasm. The protein resides in the stress granule. With respect to regulation, has weak tRNA ribonuclease activity by itself due to partial autoinhibition by its C-terminus, which folds into a short alpha-helix that partially occludes the substrate-binding site. In absence of stress, the ribonuclease activity is inhibited by RNH1 in the cytoplasm. In response to stress, dissociates from RNH1 in the cytoplasm and associates with cytoplasmic ribosomes with vacant A-sites: ribosomes directly activate the tRNA ribonuclease activity of ANG by refolding the C-terminal alpha-helix. In response to stress, the angiogenic activity of ANG is inhibited by RNH1 in the nucleus. Secreted ribonuclease that can either promote or restrict cell proliferation of target cells, depending on the context. Endocytosed in target cells via its receptor PLXNB2 and translocates to the cytoplasm or nucleus. Under stress conditions, localizes to the cytoplasm and promotes the assembly of stress granules (SGs): specifically cleaves a subset of tRNAs within anticodon loops to produce tRNA-derived stress-induced fragments (tiRNAs), resulting in translation repression and inhibition of cell proliferation. tiRNas also prevent formation of apoptosome, thereby promoting cell survival. Preferentially cleaves RNAs between a pyrimidine and an adenosine residue, suggesting that it cleaves the anticodon loop of tRNA(Ala) (32-UUAGCAU-38) after positions 33 and 36. Cleaves a subset of tRNAs, including tRNA(Ala), tRNA(Glu), tRNA(Gly), tRNA(Lys), tRNA(Val), tRNA(His), tRNA(Asp) and tRNA(Sec). Under growth conditions and in differentiated cells, translocates to the nucleus and stimulates ribosomal RNA (rRNA) transcription, including that containing the initiation site sequences of 45S rRNA, thereby promoting cell growth and proliferation. Angiogenin induces vascularization of normal and malignant tissues via its ability to promote rRNA transcription. Involved in hematopoietic stem and progenitor cell (HSPC) growth and survival by promoting rRNA transcription in growth conditions and inhibiting translation in response to stress, respectively. Mediates the crosstalk between myeloid and intestinal epithelial cells to protect the intestinal epithelial barrier integrity: secreted by myeloid cells and promotes intestinal epithelial cells proliferation and survival. Also mediates osteoclast-endothelial cell crosstalk in growing bone: produced by osteoclasts and protects the neighboring vascular cells against senescence by promoting rRNA transcription. In Papio hamadryas (Hamadryas baboon), this protein is Angiogenin (ANG).